Reading from the N-terminus, the 214-residue chain is Glutathione S-transferase F12 (214 aa).

In terms of domain architecture, GST N-terminal spans 2–82 (VVKLYGQVTA…YYATKFADQG (81 aa)). Residues 11-12 (AA), 40-41 (QK), 53-54 (QV), and 66-67 (ES) each bind glutathione. The region spanning 89 to 214 (SLEHRAIVDQ…WKKLMVLAGH (126 aa)) is the GST C-terminal domain.

This sequence belongs to the GST superfamily. Phi family.

It is found in the cytoplasm. The protein localises to the cytosol. The enzyme catalyses RX + glutathione = an S-substituted glutathione + a halide anion + H(+). Involved in the transport and/or accumulation of both anthocyanins and proanthocyanidins (PA)s in the vacuole. Functions in the cytosol to maintain the regular accumulation in the vacuole of PA precursors, such as epicatechin and glycosylated epicatechin. This Arabidopsis thaliana (Mouse-ear cress) protein is Glutathione S-transferase F12.